The sequence spans 293 residues: Small ribosomal subunit biogenesis GTPase RsgA (293 aa).

Residues 63–223 enclose the CP-type G domain; the sequence is KNELVRPPIA…VADTPGFSSL (161 aa). GTP-binding positions include 112–115 and 166–174; these read SKMD and GQSGVGKSS. The Zn(2+) site is built by cysteine 247, cysteine 252, histidine 254, and cysteine 260.

It belongs to the TRAFAC class YlqF/YawG GTPase family. RsgA subfamily. Monomer. Associates with 30S ribosomal subunit, binds 16S rRNA. It depends on Zn(2+) as a cofactor.

It is found in the cytoplasm. One of several proteins that assist in the late maturation steps of the functional core of the 30S ribosomal subunit. Helps release RbfA from mature subunits. May play a role in the assembly of ribosomal proteins into the subunit. Circularly permuted GTPase that catalyzes slow GTP hydrolysis, GTPase activity is stimulated by the 30S ribosomal subunit. In Bacillus cereus (strain ATCC 10987 / NRS 248), this protein is Small ribosomal subunit biogenesis GTPase RsgA.